The chain runs to 210 residues: MNSLSTSAFSPVAFSLGLLLVMATAFPTPGPLGGDSKDDATSNRPPLTSADKMEDFIRFILGKISALKKEMCEKYNKCEDSKEALAENNLNLPKLAEEDKCFQSQFNQETCLTRITTGLQEFQIHLKYLEANYEGNKNNAHSVYISTKHLLQKLRPMNRVEVTTPDPTTDSSLQALFKSQDKWLKHVTIHLILRSLEDFLQFSLRAIRIM.

The signal sequence occupies residues 1-25 (MNSLSTSAFSPVAFSLGLLLVMATA). Cys72 and Cys78 are oxidised to a cystine. Ser81 carries the post-translational modification Phosphoserine. Cysteines 101 and 111 form a disulfide.

This sequence belongs to the IL-6 superfamily. In terms of assembly, component of a hexamer of two molecules each of IL6, IL6R and IL6ST; first binds to IL6R to associate with the signaling subunit IL6ST. Interacts with IL6R (via the N-terminal ectodomain); this interaction may be affected by IL6R-binding with SORL1, hence decreasing IL6 cis signaling. Interacts with SORL1 (via the N-terminal ectodomain); this interaction leads to IL6 internalization and lysosomal degradation. May form a trimeric complex with the soluble SORL1 ectodomain and soluble IL6R receptor; this interaction might stabilize circulating IL6, hence promoting IL6 trans signaling.

Its subcellular location is the secreted. Its function is as follows. Cytokine with a wide variety of biological functions in immunity, tissue regeneration, and metabolism. Binds to IL6R, then the complex associates to the signaling subunit IL6ST/gp130 to trigger the intracellular IL6-signaling pathway. The interaction with the membrane-bound IL6R and IL6ST stimulates 'classic signaling', whereas the binding of IL6 and soluble IL6R to IL6ST stimulates 'trans-signaling'. Alternatively, 'cluster signaling' occurs when membrane-bound IL6:IL6R complexes on transmitter cells activate IL6ST receptors on neighboring receiver cells. IL6 is a potent inducer of the acute phase response. Rapid production of IL6 contributes to host defense during infection and tissue injury, but excessive IL6 synthesis is involved in disease pathology. In the innate immune response, is synthesized by myeloid cells, such as macrophages and dendritic cells, upon recognition of pathogens through toll-like receptors (TLRs) at the site of infection or tissue injury. In the adaptive immune response, is required for the differentiation of B cells into immunoglobulin-secreting cells. Plays a major role in the differentiation of CD4(+) T cell subsets. Essential factor for the development of T follicular helper (Tfh) cells that are required for the induction of germinal-center formation. Required to drive naive CD4(+) T cells to the Th17 lineage. Also required for proliferation of myeloma cells and the survival of plasmablast cells. In terms of biological role, acts as an essential factor in bone homeostasis and on vessels directly or indirectly by induction of VEGF, resulting in increased angiogenesis activity and vascular permeability. Induces, through 'trans-signaling' and synergistically with IL1B and TNF, the production of VEGF. Involved in metabolic controls, is discharged into the bloodstream after muscle contraction increasing lipolysis and improving insulin resistance. 'Trans-signaling' in central nervous system also regulates energy and glucose homeostasis. Mediates, through GLP-1, crosstalk between insulin-sensitive tissues, intestinal L cells and pancreatic islets to adapt to changes in insulin demand. Also acts as a myokine. Plays a protective role during liver injury, being required for maintenance of tissue regeneration. Also has a pivotal role in iron metabolism by regulating HAMP/hepcidin expression upon inflammation or bacterial infection. Through activation of IL6ST-YAP-NOTCH pathway, induces inflammation-induced epithelial regeneration. This chain is Interleukin-6 (IL6), found in Mustela putorius furo (European domestic ferret).